A 274-amino-acid polypeptide reads, in one-letter code: Transmembrane protein 106B (274 aa).

The segment covering 1 to 11 (MGKSLSHLPLH) has biased composition (low complexity). The tract at residues 1–20 (MGKSLSHLPLHSSKEDAYDG) is disordered. Residue glycine 2 is the site of N-myristoyl glycine attachment. Topologically, residues 2–96 (GKSLSHLPLH…QRLRPRRTKL (95 aa)) are cytoplasmic. Serine 33 is modified (phosphoserine). The helical transmembrane segment at 97-117 (YVMASVFVCLLLSGLAVFFLF) threads the bilayer. Residues 118–274 (PRSIDVKYIG…EYLNVLQPQQ (157 aa)) are Lumenal-facing. 4 N-linked (GlcNAc...) asparagine glycosylation sites follow: asparagine 145, asparagine 151, asparagine 164, and asparagine 183. A disulfide bond links cysteine 214 and cysteine 253. Residue asparagine 256 is glycosylated (N-linked (GlcNAc...) asparagine).

It belongs to the TMEM106 family. As to quaternary structure, can form homomers. Interacts (via N-terminus) with MAP6 (via C-terminus). Interacts (via C-terminus) with the vacuolar-type ATPase subunit ATP6AP1. Interacts (via N-terminus) with AP2M1 and CLTC. Interacts with TMEM106C. (Microbial infection) Interacts with SARS coronavirus-2/SARS-CoV-2 spike protein (via RBD domain). Expressed in the brain, including in the frontal cortex (at protein level). Expressed in lung epithelial cells.

The protein resides in the late endosome membrane. It localises to the lysosome membrane. The protein localises to the cell membrane. In neurons, involved in the transport of late endosomes/lysosomes. May be involved in dendrite morphogenesis and maintenance by regulating lysosomal trafficking. May act as a molecular brake for retrograde transport of late endosomes/lysosomes, possibly via its interaction with MAP6. In motoneurons, may mediate the axonal transport of lysosomes and axonal sorting at the initial segment. It remains unclear whether TMEM106B affects the transport of moving lysosomes in the anterograde or retrograde direction in neurites and whether it is important in the sorting of lysosomes in axons or in dendrites. In neurons, may also play a role in the regulation of lysosomal size and responsiveness to stress. Required for proper lysosomal acidification. In terms of biological role, (Microbial infection) Plays a role in human coronavirus SARS-CoV-2 infection, but not in common cold coronaviruses HCoV-229E and HCoV-OC43 infections. Involved in ACE2-independent SARS-CoV-2 cell entry. Required for post-endocytic stage of virus entry, facilitates spike-mediated membrane fusion. Virus attachment and endocytosis can also be mediated by other cell surface receptors. The sequence is that of Transmembrane protein 106B from Homo sapiens (Human).